A 349-amino-acid chain; its full sequence is Aspartate carbamoyltransferase catalytic subunit (349 aa).

Arginine 59 and threonine 60 together coordinate carbamoyl phosphate. Position 87 (lysine 87) interacts with L-aspartate. Carbamoyl phosphate is bound by residues arginine 109, histidine 142, and glutamine 145. Arginine 182 and arginine 253 together coordinate L-aspartate. Residues glycine 294 and proline 295 each contribute to the carbamoyl phosphate site.

Belongs to the aspartate/ornithine carbamoyltransferase superfamily. ATCase family. In terms of assembly, heterododecamer (2C3:3R2) of six catalytic PyrB chains organized as two trimers (C3), and six regulatory PyrI chains organized as three dimers (R2).

It catalyses the reaction carbamoyl phosphate + L-aspartate = N-carbamoyl-L-aspartate + phosphate + H(+). Its pathway is pyrimidine metabolism; UMP biosynthesis via de novo pathway; (S)-dihydroorotate from bicarbonate: step 2/3. In terms of biological role, catalyzes the condensation of carbamoyl phosphate and aspartate to form carbamoyl aspartate and inorganic phosphate, the committed step in the de novo pyrimidine nucleotide biosynthesis pathway. In Synechococcus sp. (strain CC9311), this protein is Aspartate carbamoyltransferase catalytic subunit.